Reading from the N-terminus, the 3326-residue chain is Deoxyribonuclease CdiA (3326 aa).

The interval 36–342 (TADGVLTSGG…ARGALTLTGS (307 aa)) is two-partner system transport domain (TPS). Positions 343 to 1396 (YAGAGSLYSD…ITVRTGTLTN (1054 aa)) are FHA-1. The tract at residues 1397 to 1765 (QREGLVVTES…QQLGSPSLTD (369 aa)) is receptor binding domain (RBD). The YP domain stretch occupies residues 1766–1951 (YPLPTSQSGL…LAQADKTNLQ (186 aa)). A periplasmic FHA-1 repeat (pFR) region spans residues 1959–2097 (SVSLSAGGDI…AGGPLQLAAG (139 aa)). Positions 2125–2660 (QGLVQSTVAS…SNRYDSKQTS (536 aa)) are FHA-2. Residues 3060–3063 (VENN) carry the VENN CT cleavage motif motif. The tract at residues 3060 to 3326 (VENNSLGDIA…DRNRQIGVIK (267 aa)) is CT domain.

It in the N-terminal section; belongs to the CdiA toxin family. The C-terminal (CT) domain interacts with cognate CdiI but not non-cognate CdiI from E.coli strain 536 / UPEC.

The protein resides in the target cell. The protein localises to the target cell cytoplasm. Toxic component of a toxin-immunity protein module, which functions as a cellular contact-dependent growth inhibition (CDI) system. CDI modules allow bacteria to communicate with and inhibit the growth of closely related neighboring bacteria in a contact-dependent fashion. CDI is neutralized by its cognate immunity protein CdiI, but not by non-cognate CdiI from other bacteria. The C-terminal domain (CT) has strong DNase activity; this activity is inhibited by cognate CdiI. Functionally, the CdiA protein is thought to be exported from the cell through the central lumen of CdiB, the other half of its two-partner system (TPS). The TPS domain probably remains associated with CdiB while the FHA-1 domain forms an extended filament with the receptor-binding domain (RBD) at its extremity; in the secretion arrested state the C-terminus of the RBD and YP domains form a hairpin-like structure as the FHA-2, PT and CT domains are periplasmic. The YP domain is probably responsible for this arrest at the point where it re-enters the host cell periplasm. Upon binding to a target cell outer membrane receptor a signal is transmitted to activate secretion. The filament elongates slightly, the rest of CdiA is secreted and the FHA-2 domain becomes stably associated with the target cell's outer membrane where it facilitates entry of the toxic CT domain into the target cell periplasm. From there the toxic CT domain is cleaved and gains access to the target cell cytoplasm via an inner membrane protein. The sequence is that of Deoxyribonuclease CdiA from Dickeya dadantii (strain 3937) (Erwinia chrysanthemi (strain 3937)).